A 250-amino-acid polypeptide reads, in one-letter code: GTP cyclohydrolase 1 (250 aa).

Basic and acidic residues-rich tracts occupy residues 1 to 14 (MEKG…EKPR) and 35 to 44 (PAEKPPRPEA). The interval 1–64 (MEKGPVRAPA…GERPRSEEDN (64 aa)) is disordered. 2 positions are modified to phosphoserine: serine 60 and serine 81. Zn(2+)-binding residues include cysteine 141, histidine 144, and cysteine 212.

Belongs to the GTP cyclohydrolase I family. Toroid-shaped homodecamer, composed of a dimer of pentamers. The inactive isoforms also form decamers and may possibly be incorporated into GCH1 heterodecamers, decreasing enzyme stability and activity. Interacts with AHSA1 and GCHFR/GFRP. In terms of processing, phosphorylated by casein kinase II at Ser-81 in HAECs during oscillatory shear stress; phosphorylation at Ser-81 results in increased enzyme activity. In terms of tissue distribution, in epidermis, expressed predominantly in basal undifferentiated keratinocytes and in some but not all melanocytes (at protein level).

The protein resides in the cytoplasm. It localises to the nucleus. It catalyses the reaction GTP + H2O = 7,8-dihydroneopterin 3'-triphosphate + formate + H(+). The protein operates within cofactor biosynthesis; 7,8-dihydroneopterin triphosphate biosynthesis; 7,8-dihydroneopterin triphosphate from GTP: step 1/1. With respect to regulation, GTP shows a positive allosteric effect, and tetrahydrobiopterin inhibits the enzyme activity. Zinc is required for catalytic activity. Inhibited by Mg(2+). Its function is as follows. Positively regulates nitric oxide synthesis in umbilical vein endothelial cells (HUVECs). May be involved in dopamine synthesis. May modify pain sensitivity and persistence. Isoform GCH-1 is the functional enzyme, the potential function of the enzymatically inactive isoforms remains unknown. This is GTP cyclohydrolase 1 (GCH1) from Homo sapiens (Human).